Consider the following 65-residue polypeptide: Conotoxin VnMLCL-041 (65 aa).

The N-terminal stretch at 1 to 19 (MLCLPVFIILLLLASPAAP) is a signal peptide. Positions 20–43 (NPLQTRIQSNLIRAGPEDANIKTD) are excised as a propeptide. The residue at position 64 (K64) is a Lysine amide.

Belongs to the conotoxin T superfamily. In terms of tissue distribution, expressed by the venom duct.

The protein localises to the secreted. The protein is Conotoxin VnMLCL-041 of Conus ventricosus (Mediterranean cone).